Reading from the N-terminus, the 633-residue chain is Chaperone protein dnaK2 (633 aa).

Residue Thr-197 is modified to Phosphothreonine; by autocatalysis. Residues 600–633 are disordered; sequence SNAASQAADGTSSESNNSTEGNDDVIDAEFTESK. Residues 608–619 show a composition bias toward low complexity; sequence DGTSSESNNSTE. A compositionally biased stretch (acidic residues) spans 620–633; sequence GNDDVIDAEFTESK.

It belongs to the heat shock protein 70 family.

Functionally, acts as a chaperone. This is Chaperone protein dnaK2 (dnaK2) from Prochlorococcus marinus (strain SARG / CCMP1375 / SS120).